We begin with the raw amino-acid sequence, 427 residues long: Glutamate-1-semialdehyde 2,1-aminomutase 1 (427 aa).

An N6-(pyridoxal phosphate)lysine modification is found at Lys-265.

The protein belongs to the class-III pyridoxal-phosphate-dependent aminotransferase family. HemL subfamily. In terms of assembly, homodimer. Requires pyridoxal 5'-phosphate as cofactor.

The protein localises to the cytoplasm. It carries out the reaction (S)-4-amino-5-oxopentanoate = 5-aminolevulinate. It participates in porphyrin-containing compound metabolism; protoporphyrin-IX biosynthesis; 5-aminolevulinate from L-glutamyl-tRNA(Glu): step 2/2. The chain is Glutamate-1-semialdehyde 2,1-aminomutase 1 from Lachnoclostridium phytofermentans (strain ATCC 700394 / DSM 18823 / ISDg) (Clostridium phytofermentans).